The chain runs to 988 residues: Vacuolar sorting protein 18 (988 aa).

Residues 589–749 (NKNLNPRRLI…VVKQEKGAKR (161 aa)) form a CHCR repeat. The stretch at 785-819 (KEAICSSLEDYNKQIEQLKEEMNDATRGADNIRND) forms a coiled coil. An RING-type; degenerate zinc finger spans residues 836-886 (CGVCKRKILMMSGDFRMAQGYSSAGPLAPFYVFPCGHSFHAQCLITHVTSC).

This sequence belongs to the VPS18 family. As to quaternary structure, core component of at least two putative endosomal tethering complexes, the homotypic fusion and vacuole protein sorting (HOPS) complex and the class C core vacuole/endosome tethering (CORVET) complex. Their common core is composed of the class C Vps proteins VPS11, VCL1, VPS18 and VPS33, which in HOPS further associates with VPS39 and VPS41 and in CORVET with VPS3.

Its subcellular location is the endosome membrane. It localises to the vacuole membrane. It is found in the cytoplasm. Its function is as follows. Essential protein required during embryogenesis. Believed to act as a core component of the putative HOPS endosomal tethering complex and of the class C core vacuole/endosome tethering (CORVET) complex. CORVET is required for vacuolar transport of SYP22. HOPS is required for the central vacuole formation. Involved in root development. Plays a role in vesicle-mediated protein trafficking to lysosomal compartments including the endocytic membrane transport pathways. The protein is Vacuolar sorting protein 18 of Arabidopsis thaliana (Mouse-ear cress).